Consider the following 433-residue polypeptide: Oxidoreductase acuF (433 aa).

Its pathway is secondary metabolite biosynthesis. Functionally, oxidoreductase; part of the gene cluster that mediates the biosynthesis of aculins. The pathway begins with the synthesis of 6-methylsalicylic acid by the polyketide synthase (PKS) acuA via condensation of acetate and malonate units. The 6-methylsalicylic acid decarboxylase acuB then catalyzes the decarboxylation of 6-methylsalicylic acid to yield m-cresol (also known as 3-methylphenol). These first reactions occur in the cytosol. The intermediate m-cresol is then transported into the endoplasmic reticulum where the cytochrome P450 monooxygenase acuC converts it to m-hydroxybenzyl alcohol, which is further converted to gentisyl alcohol by the cytochrome P450 monooxygenase acuD. Gentisyl alcohol is further oxidized by the oxidoreductase acuE that probably catalyzes hydroxylation of the aromatic ring. The aromatic system might then be opened by oxidation through a Baeyer-Villiger type of oxidation, which could be catalyzed by acuF, with the carboxylic acid at C-1 subsequently reduced to an aldehyde by acuG. Subsequently, a hemiacetal is formed, before the dehydrogenase acuH would reduce the double bond between C-4 and C-6. Finally, keto-enol tautomerism results in formation of aculinic acid, which exists as two diastereomers (both R/S configurations at C-1) by non-enzymatic hemiacetal formation. The carboxypeptidase acuI could be involved in the linking of aculinic acid to an aculene A moiety produced by the aculene biosynthesis cluster and which leads to the production of aculin A. AcuI may also be involved in the attachment of proline to aculinic acid to form epi-aculins A and B. The protein is Oxidoreductase acuF of Aspergillus aculeatus (strain ATCC 16872 / CBS 172.66 / WB 5094).